We begin with the raw amino-acid sequence, 1344 residues long: Eukaryotic translation initiation factor 3 subunit A (1344 aa).

K68 is subject to N6-acetyllysine. A coiled-coil region spans residues 82 to 120 (NIKSLEDVVRAYLKLAEEKTEAAKEESQQMVLDIEDLDN). A PCI domain is found at 315 to 498 (MQRMSTRVLL…RTLSFGSDLN (184 aa)). Phosphoserine is present on residues S492 and S584. Positions 664 to 835 (LDPDFIMAKQ…REERERAERA (172 aa)) are interaction with EIF3B. Disordered regions lie at residues 807–844 (YREK…LREY), 866–1240 (EERE…DRDD), and 1252–1344 (DLRD…TVRR). Basic and acidic residues-rich tracts occupy residues 866-1126 (EERE…DDAR), 1138-1240 (GWRE…DRDD), 1252-1292 (DLRD…DPPR), and 1300-1333 (SRDR…TKNE). S895 bears the Phosphoserine mark. A 1; truncated repeat occupies 924–931 (DDERPHRR). Positions 924-1133 (DDERPHRRDE…DARPGPWRPF (210 aa)) are 21 X 10 AA approximate tandem repeats of [DA]-[DE]-[ED]-R-[PLIGFSV]-[RPS]-[RW]-[RL]-[GNIHT]-[DGLPTAM]. Repeat unit 2 spans residues 932–941 (DEDRLRRLGG). Residues 942 to 951 (DDEERESSLR) form a 3; approximate repeat. The residue at position 949 (S949) is a Phosphoserine. 17 repeat units span residues 953–962 (DDDRIPRRGL), 963–972 (DDDRGPRRGP), 973–982 (DEDRFSRRGT), 983–992 (DDDRPSWRNA), 993–1002 (DDDRPPRRIG), 1003–1012 (DDDRGSWRHT), 1013–1022 (DDDRPPRRGL), 1023–1032 (DDERGSWRTA), 1033–1042 (DEDRGPRRGM), 1043–1052 (DDDRGPRRGG), 1054–1063 (DDERSSWRNA), 1064–1073 (DDDRGPRRGM), 1074–1083 (DDDRGPRRGL), 1084–1093 (DDDRGPWRNA), 1094–1103 (AEDRISRRGA), 1104–1113 (DDDRGPWRNM), and 1114–1123 (DDDRVPRRGD). Phosphoserine is present on S1028. One copy of the 21; approximate repeat lies at 1124–1133 (DARPGPWRPF). Phosphoserine occurs at positions 1149, 1159, and 1223. A phosphoserine mark is found at S1300 and S1326.

The protein belongs to the eIF-3 subunit A family. As to quaternary structure, interacts with KRT7. Component of the eukaryotic translation initiation factor 3 (eIF-3) complex, which is composed of 13 subunits: EIF3A, EIF3B, EIF3C, EIF3D, EIF3E, EIF3F, EIF3G, EIF3H, EIF3I, EIF3J, EIF3K, EIF3L and EIF3M. The eIF-3 complex appears to include 3 stable modules: module A is composed of EIF3A, EIF3B, EIF3G and EIF3I; module B is composed of EIF3F, EIF3H, and EIF3M; and module C is composed of EIF3C, EIF3D, EIF3E, EIF3L and EIF3K. EIF3C of module C binds EIF3B of module A and EIF3H of module B, thereby linking the three modules. EIF3J is a labile subunit that binds to the eIF-3 complex via EIF3B. The eIF-3 complex may interact with RPS6KB1 under conditions of nutrient depletion. Mitogenic stimulation may lead to binding and activation of a complex composed of MTOR and RPTOR, leading to phosphorylation and release of RPS6KB1 and binding of EIF4B to eIF-3. Interacts with EIF4G1 and PIWIL2. In terms of processing, phosphorylated. Phosphorylation is enhanced upon serum stimulation.

The protein localises to the cytoplasm. The protein resides in the cytoskeleton. It localises to the microtubule organizing center. It is found in the centrosome. Its subcellular location is the nucleus. Its function is as follows. RNA-binding component of the eukaryotic translation initiation factor 3 (eIF-3) complex, which is required for several steps in the initiation of protein synthesis. The eIF-3 complex associates with the 40S ribosome and facilitates the recruitment of eIF-1, eIF-1A, eIF-2:GTP:methionyl-tRNAi and eIF-5 to form the 43S pre-initiation complex (43S PIC). The eIF-3 complex stimulates mRNA recruitment to the 43S PIC and scanning of the mRNA for AUG recognition. The eIF-3 complex is also required for disassembly and recycling of post-termination ribosomal complexes and subsequently prevents premature joining of the 40S and 60S ribosomal subunits prior to initiation. The eIF-3 complex specifically targets and initiates translation of a subset of mRNAs involved in cell proliferation, including cell cycling, differentiation and apoptosis, and uses different modes of RNA stem-loop binding to exert either translational activation or repression. The protein is Eukaryotic translation initiation factor 3 subunit A (Eif3a) of Mus musculus (Mouse).